Consider the following 187-residue polypeptide: UPF0301 protein VSAL_I0547 (187 aa).

Belongs to the UPF0301 (AlgH) family.

The sequence is that of UPF0301 protein VSAL_I0547 from Aliivibrio salmonicida (strain LFI1238) (Vibrio salmonicida (strain LFI1238)).